The chain runs to 131 residues: Small ribosomal subunit protein eS24 (131 aa).

A disordered region spans residues 93 to 131 (RHGLYEKKKTSRKQRKERKNRMKKVRGTKKASVGAAGKK). Basic residues predominate over residues 101–121 (KTSRKQRKERKNRMKKVRGTK).

Belongs to the eukaryotic ribosomal protein eS24 family. Component of the small ribosomal subunit. Part of the small subunit (SSU) processome, composed of more than 70 proteins and the RNA chaperone small nucleolar RNA (snoRNA) U3.

It localises to the cytoplasm. The protein localises to the nucleus. Its subcellular location is the nucleolus. Its function is as follows. Component of the small ribosomal subunit. The ribosome is a large ribonucleoprotein complex responsible for the synthesis of proteins in the cell. Required for processing of pre-rRNA and maturation of 40S ribosomal subunits. Part of the small subunit (SSU) processome, first precursor of the small eukaryotic ribosomal subunit. During the assembly of the SSU processome in the nucleolus, many ribosome biogenesis factors, an RNA chaperone and ribosomal proteins associate with the nascent pre-rRNA and work in concert to generate RNA folding, modifications, rearrangements and cleavage as well as targeted degradation of pre-ribosomal RNA by the RNA exosome. The polypeptide is Small ribosomal subunit protein eS24 (rps24) (Ictalurus punctatus (Channel catfish)).